A 984-amino-acid polypeptide reads, in one-letter code: PAX-interacting protein 1 (984 aa).

BRCT domains follow at residues 8–93 and 94–183; these read VPEE…GFSP and ESCQ…LYHP. The tract at residues 94–183 is interaction with PAGR1; it reads ESCQIFFGIT…TRKDEALYHP (90 aa). 2 disordered regions span residues 187-271 and 417-509; these read VYEE…PAEV and QQHL…LFGH. Residues 188-208 show a composition bias toward acidic residues; that stretch reads YEEEEEEEEEEEGAGNEEPDS. Residues 217-229 show a composition bias toward low complexity; the sequence is KSSPASSQEGSPS. A phosphoserine mark is found at serine 227 and serine 235. Residues 424–454 show a composition bias toward pro residues; it reads PYPPPPPHPFPPPPAHPHQFPQPPLQRPQPP. Residues 455 to 485 show a composition bias toward low complexity; the sequence is LQQQQLSHLQQQQLQHLQRLQQMQPTPTAQL. Residues 486–499 are compositionally biased toward pro residues; the sequence is PGPPAQALQPPPPQ. Residues 505-984 form an interaction with TP53BP1 region; that stretch reads PLFGHDPAVE…TLDYESYKFN (480 aa). 2 consecutive BRCT domains span residues 516 to 609 and 616 to 704; these read PEEG…RALH and PGGK…TQYG. A Nuclear localization signal motif is present at residues 583–600; the sequence is RKRCITAHWLNTVLKKKK. The disordered stretch occupies residues 750–771; that stretch reads KQNEVTNVQPSSKRARIEDIPP. Residues 752–761 show a composition bias toward polar residues; that stretch reads NEVTNVQPSS. 2 consecutive BRCT domains span residues 781–862 and 883–924; these read TPFV…NYLL and HASP…QPSF.

In terms of assembly, interacts with the C-terminal transactivation domain of PAX2. Forms a constitutive complex with PAGR1 independently of the MLL2/MLL3 complex. Interacts with TP53BP1 (when phosphorylated at the N-terminus by ATM). Interacts with HLTF. Component of the KMT2 family MLL2/MLL3 complex (also named ASCOM complex), at least composed of the HMTs KMT2D and/or KMT2C, the common subunits ASH2L, RBBP5, WDR5 and DPY30, and the complex type-specific subunits PAXIP1/PTIP, PAGR1, NCOA6 and KDM6A; required for the association of PAGR1 with the MLL2/MLL3 complex. Interacts with NUPR1; this interaction prevents PAXIP1 inhibition of PAX2 transcription factor activity.

Its subcellular location is the nucleus matrix. It is found in the chromosome. Its function is as follows. Involved in DNA damage response and in transcriptional regulation through histone methyltransferase (HMT) complexes. Plays a role in early development. In DNA damage response is required for cell survival after ionizing radiation. In vitro shown to be involved in the homologous recombination mechanism for the repair of double-strand breaks (DSBs). Its localization to DNA damage foci requires RNF8 and UBE2N. Recruits TP53BP1 to DNA damage foci and, at least in particular repair processes, effective DNA damage response appears to require the association with TP53BP1 phosphorylated by ATM at 'Ser-25'. Together with TP53BP1 regulates ATM association. Proposed to recruit PAGR1 to sites of DNA damage and the PAGR1:PAXIP1 complex is required for cell survival in response to DNA damage; the function is probably independent of MLL-containing histone methyltransferase (HMT) complexes. However, this function has been questioned. Promotes ubiquitination of PCNA following UV irradiation and may regulate recruitment of polymerase eta and RAD51 to chromatin after DNA damage. Proposed to be involved in transcriptional regulation by linking MLL-containing histone methyltransferase (HMT) complexes to gene promoters by interacting with promoter-bound transcription factors such as PAX2. Associates with gene promoters that are known to be regulated by KMT2D/MLL2. During immunoglobulin class switching in activated B-cells is involved in trimethylation of histone H3 at 'Lys-4' and in transcription initiation of downstream switch regions at the immunoglobulin heavy-chain (Igh) locus; this function appears to involve the recruitment of MLL-containing HMT complexes. Conflictingly, its function in transcriptional regulation during immunoglobulin class switching is reported to be independent of the MLL2/MLL3 complex. This chain is PAX-interacting protein 1 (PAXIP1), found in Bos taurus (Bovine).